Here is a 121-residue protein sequence, read N- to C-terminus: Large ribosomal subunit protein bL20 (121 aa).

It belongs to the bacterial ribosomal protein bL20 family.

Binds directly to 23S ribosomal RNA and is necessary for the in vitro assembly process of the 50S ribosomal subunit. It is not involved in the protein synthesizing functions of that subunit. The polypeptide is Large ribosomal subunit protein bL20 (Polynucleobacter asymbioticus (strain DSM 18221 / CIP 109841 / QLW-P1DMWA-1) (Polynucleobacter necessarius subsp. asymbioticus)).